The following is a 197-amino-acid chain: Probable GTP-binding protein EngB (197 aa).

One can recognise an EngB-type G domain in the interval 22-195 (KRIEIAFVGR…LKVLESVIDF (174 aa)). GTP contacts are provided by residues 30–37 (GRSNVGKS), 57–61 (GKTRL), 75–78 (DLPG), 142–145 (TKVD), and 174–176 (FSS). Mg(2+) is bound by residues S37 and T59.

This sequence belongs to the TRAFAC class TrmE-Era-EngA-EngB-Septin-like GTPase superfamily. EngB GTPase family. It depends on Mg(2+) as a cofactor.

Its function is as follows. Necessary for normal cell division and for the maintenance of normal septation. The chain is Probable GTP-binding protein EngB from Clostridium kluyveri (strain ATCC 8527 / DSM 555 / NBRC 12016 / NCIMB 10680 / K1).